The chain runs to 210 residues: MEEPASADPPRIFWKSRRRSASANGRSLQQELNKEAADEQLNNQAHEEAMKIDDANAVSTDDDVHPDPKANLSEKRKALFEPLEPINGKRSSAEMLLPPPDFEPASYPKGWLVGKKRKLVNVDVVESMRRIAIQEMNRKDREINGLNEQLEEDSRVLELLQKQLADERKKRTEIEKENSMLHEQVSMLMNMLDENEAFDEEGEAPPPDTL.

The segment at 1-97 is disordered; it reads MEEPASADPP…GKRSSAEMLL (97 aa). The stretch at 29 to 49 forms a coiled coil; sequence QQELNKEAADEQLNNQAHEEA. Basic and acidic residues-rich tracts occupy residues 45 to 54 and 62 to 79; these read AHEEAMKIDD and DDVHPDPKANLSEKRKAL. Residues 129-184 are a coiled coil; it reads RRIAIQEMNRKDREINGLNEQLEEDSRVLELLQKQLADERKKRTEIEKENSMLHEQ.

Interacts with OSK3 and OSK4. Mostly expressed in leaves, seedlings and floral organs, and, to a lower extent, in panicle, roots, nodes, internodes, leaf joint and sheath.

It localises to the nucleus. Its function is as follows. Regulates flowering time via a photoperiod-dependent pathway. Suppressor of flowering that upregulates HD1 and down-regulates EHD1 in long days (LD), thus leading to the down-regulation of HD3A and RFT1. Triggers OSK4-mediated HD1 phosphorylation. The protein is Protein HEADING DATE REPRESSOR 1 of Oryza sativa subsp. japonica (Rice).